A 684-amino-acid polypeptide reads, in one-letter code: DNA-directed RNA polymerase subunit beta' (684 aa).

The Zn(2+) site is built by Cys-69, Cys-71, Cys-87, and Cys-90. 3 residues coordinate Mg(2+): Asp-489, Asp-491, and Asp-493.

It belongs to the RNA polymerase beta' chain family. RpoC1 subfamily. In plastids the minimal PEP RNA polymerase catalytic core is composed of four subunits: alpha, beta, beta', and beta''. When a (nuclear-encoded) sigma factor is associated with the core the holoenzyme is formed, which can initiate transcription. Mg(2+) serves as cofactor. Requires Zn(2+) as cofactor.

Its subcellular location is the plastid. It localises to the chloroplast. It carries out the reaction RNA(n) + a ribonucleoside 5'-triphosphate = RNA(n+1) + diphosphate. DNA-dependent RNA polymerase catalyzes the transcription of DNA into RNA using the four ribonucleoside triphosphates as substrates. In Marchantia polymorpha (Common liverwort), this protein is DNA-directed RNA polymerase subunit beta'.